We begin with the raw amino-acid sequence, 317 residues long: Insulin-like growth factor-binding protein 2 (317 aa).

An N-terminal signal peptide occupies residues 1–33; sequence MQPRLGGPALLLLPPLLLLLLLGAGGGDCGARA. The region spanning 35 to 126 is the IGFBP N-terminal domain; the sequence is VLFRCPPCTP…VHGEGTCEKH (92 aa). 6 cysteine pairs are disulfide-bonded: Cys39/Cys76, Cys42/Cys78, Cys50/Cys79, Cys68/Cys82, Cys90/Cys103, and Cys97/Cys123. Disordered regions lie at residues 126 to 146 and 190 to 218; these read HGDA…EEHS and QHRQ…ARTP. The region spanning 216–298 is the Thyroglobulin type-1 domain; sequence RTPCQQELDQ…APTIRGDPEC (83 aa). 3 cysteine pairs are disulfide-bonded: Cys219/Cys253, Cys264/Cys275, and Cys277/Cys298. The short motif at 293–295 is the Cell attachment site element; the sequence is RGD.

As to quaternary structure, interacts with IGF1. Interacts with IGF2. Interacts (via RGD motif) with integrin alpha5/ITGA5; this interaction induces cell migration, adhesion or apoptosis according to the context. Interacts with PTPRB; this interaction leads to PTPRB dimerization and inactivation. Cleaved by MMP9 leading to release of free IGF2 from IGFBP2-IGF2 complex, which contributes to enhance the motility and the growth of astrocytes. Post-translationally, O-glycosylated.

The protein localises to the secreted. Its function is as follows. Multifunctional protein that plays a critical role in regulating the availability of IGFs such as IGF1 and IGF2 to their receptors and thereby regulates IGF-mediated cellular processes including proliferation, differentiation, and apoptosis in a cell-type specific manner. Functions coordinately with receptor protein tyrosine phosphatase beta/PTPRB and the IGF1 receptor to regulate IGF1-mediated signaling by stimulating the phosphorylation of PTEN leading to its inactivation and AKT1 activation. Plays a positive role in cell migration via interaction with integrin alpha5/ITGA5 through an RGD motif. Additionally, interaction with ITGA5/ITGB1 enhances the adhesion of endothelial progenitor cells to endothelial cells. Upon mitochondrial damage, facilitates apoptosis with ITGA5 of podocytes, and then activates the phosphorylation of focal adhesion kinase (FAK)-mediated mitochondrial injury. The protein is Insulin-like growth factor-binding protein 2 (IGFBP2) of Bos taurus (Bovine).